Reading from the N-terminus, the 845-residue chain is Meiotically up-regulated gene 4 protein (845 aa).

Positions L122–P158 are disordered. A compositionally biased stretch (low complexity) spans P132–S145. Residues F726–P746 traverse the membrane as a helical segment.

The protein localises to the membrane. Has a role in meiosis. The chain is Meiotically up-regulated gene 4 protein (mug4) from Schizosaccharomyces pombe (strain 972 / ATCC 24843) (Fission yeast).